We begin with the raw amino-acid sequence, 365 residues long: TD and POZ domain-containing protein 1-like (365 aa).

An MATH domain is found at 19 to 149 (KFCYKWTISN…EDQLTICCKV (131 aa)). One can recognise a BTB domain in the interval 188 to 255 (TDCCLLVAGH…IYTGKAPYLH (68 aa)).

The protein belongs to the Tdpoz family.

The protein is TD and POZ domain-containing protein 1-like of Mus musculus (Mouse).